The following is a 385-amino-acid chain: Probable thioesterase PNKD (385 aa).

The disordered stretch occupies residues 32 to 58 (KASHNRTRALQSHSSPEGKEEPEPLSP). The Zn(2+) site is built by histidine 172, histidine 174, aspartate 176, histidine 177, histidine 229, aspartate 253, and histidine 291.

It belongs to the metallo-beta-lactamase superfamily. Glyoxalase II family. As to quaternary structure, isoform 2 interacts with the sarcomeric proteins, MRLC2, MYOM1 and ENO3. Requires Zn(2+) as cofactor. Post-translationally, undergoes cleavage at the N-terminus. As to expression, isoform 1 is only expressed in the brain. Isoform 2 is ubiquitously detected with highest expression in skeletal muscle and detected in myocardial myofibrils.

Its subcellular location is the cell membrane. The protein resides in the mitochondrion. The protein localises to the cytoplasm. It localises to the golgi apparatus. It is found in the endoplasmic reticulum. It catalyses the reaction a thioester + H2O = a thiol + a carboxylate + H(+). In terms of biological role, probable thioesterase that may play a role in cellular detoxification processes; it likely acts on a yet-unknown alpha-hydroxythioester substrate. In vitro, it is able to catalyze the hydrolysis of S-D-lactoyl-glutathione to form glutathione and D-lactic acid at very low rate, though this reaction is not physiologically relevant in vivo. This chain is Probable thioesterase PNKD (PNKD), found in Homo sapiens (Human).